The primary structure comprises 152 residues: Endoribonuclease YbeY (152 aa).

Residues histidine 113, histidine 117, and histidine 123 each contribute to the Zn(2+) site.

This sequence belongs to the endoribonuclease YbeY family. Requires Zn(2+) as cofactor.

It is found in the cytoplasm. In terms of biological role, single strand-specific metallo-endoribonuclease involved in late-stage 70S ribosome quality control and in maturation of the 3' terminus of the 16S rRNA. The protein is Endoribonuclease YbeY of Paracidovorax citrulli (strain AAC00-1) (Acidovorax citrulli).